Here is a 524-residue protein sequence, read N- to C-terminus: FAD-dependent monooxygenase opdD (524 aa).

Positions 48 and 145 each coordinate FAD.

Belongs to the paxM FAD-dependent monooxygenase family.

Its pathway is secondary metabolite biosynthesis. FAD-dependent monooxygenase; part of the gene cluster that mediates the biosynthesis of oxopyrrolidines, polyketide-amino acid hybrid compounds with feature structures of tetramic acid. Does not seem to play a role in oxopyrrolidines A and B biosynthesis. May be involved in further modifications of these oxopyrrolidines. In Penicillium oxalicum (strain 114-2 / CGMCC 5302) (Penicillium decumbens), this protein is FAD-dependent monooxygenase opdD.